Consider the following 444-residue polypeptide: MSAGKLPVDWKTVELGELIKLSTGKLDANAADNDGQYPFFTCAESVSQINSWAFDTSAVLLAGNGSFSIKKYTGKFNAYQRTYVIEPILIKTEFLYWLLRGNIKKITENGRGSTIPYIRKGDITDISVALPSPSEQTLIAEKLDTLLAQVESTKARLEQIPQILKRFRQAVLTFAMNGELTKEWRSQNNNPAFFPAEKNSLKQFRNKELPSIPNNWSWMRFDQVADIASKLKSPLDYPNTIHLAPNHIESWTGKASGYQTILEDGVTSAKHEFYTGQIIYSKIRPYLCKVTIATFDGMCSADMYPINSKIDTHFLFRWMLTNTFTDWASNAESRTVLPKINQKDLSEIPVPTPPLPEQHEIVRRVEQLFAYADTIEKQVNNALARVNNLTQSILAKAFRGELTAQWRAENPDLISGENSAAALLEKIKAERAASGGKKASRKKS.

It belongs to the type-I restriction system S methylase family. As to quaternary structure, the type I restriction/modification system is composed of three polypeptides R, M and S; the restriction enzyme has stoichiometry R(2)M(2)S(1) while the methyltransferase is M(2)S(1).

Functionally, the specificity (S) subunit of a type I restriction enzyme; this subunit dictates DNA sequence specificity. The M and S subunits together form a methyltransferase (MTase) that methylates two adenine residues of the sequence 5'-TTAN(7)GTCY-3'. In the presence of the R subunit the complex can also act as an endonuclease, binding to the same target sequence but cutting the DNA some distance from this site. Whether the DNA is cut or modified depends on the methylation state of the target sequence. When the target site is unmodified, the DNA is cut. When the target site is hemimethylated, the complex acts as a maintenance MTase modifying the DNA so that both strands become methylated. After locating a non-methylated recognition site, the enzyme complex serves as a molecular motor that translocates DNA in an ATP-dependent manner until a collision occurs that triggers cleavage. This chain is Type I restriction enzyme EcoDI specificity subunit, found in Escherichia coli.